The primary structure comprises 1084 residues: Myosin heavy chain, skeletal muscle (1084 aa).

Disordered stretches follow at residues 1–20 (SAET…KTKE), 270–292 (EIEA…SREL), and 298–317 (RLEE…KKRE). An alpha-helical tailpiece (S2) region spans residues 1–258 (SAETEKEMAN…SKIEDEQALM (258 aa)). Residues 259 to 1084 (TNLQRIEELE…DVHSKVISEE (826 aa)) are rodlike tail (S2 and LMM domains). Over residues 273-292 (AERASRAKAEKQRSDLSREL) the composition is skewed to basic and acidic residues. Positions 455 to 1084 (QAFTQQIEGL…DVHSKVISEE (630 aa)) form a coiled coil.

As to quaternary structure, muscle myosin is a hexameric protein that consists of 2 heavy chain subunits (MHC), 2 alkali light chain subunits (MLC) and 2 regulatory light chain subunits (MLC-2).

It localises to the cytoplasm. The protein resides in the myofibril. Functionally, muscle contraction. This chain is Myosin heavy chain, skeletal muscle, found in Oryctolagus cuniculus (Rabbit).